The following is a 103-amino-acid chain: Large ribosomal subunit protein uL24 (103 aa).

The protein belongs to the universal ribosomal protein uL24 family. Part of the 50S ribosomal subunit.

Its function is as follows. One of two assembly initiator proteins, it binds directly to the 5'-end of the 23S rRNA, where it nucleates assembly of the 50S subunit. One of the proteins that surrounds the polypeptide exit tunnel on the outside of the subunit. This Roseobacter denitrificans (strain ATCC 33942 / OCh 114) (Erythrobacter sp. (strain OCh 114)) protein is Large ribosomal subunit protein uL24.